The primary structure comprises 399 residues: Subtilisin-like protease 4 (399 aa).

The N-terminal stretch at 1–19 (MVCLKTLSVFLAAFAVADA) is a signal peptide. The propeptide occupies 20–118 (RAVFKTQSNK…VEQDQVVRIS (99 aa)). Residues 38 to 117 (YIVVMKDGVS…YVEQDQVVRI (80 aa)) enclose the Inhibitor I9 domain. The region spanning 128–399 (SWGLGRVSHR…NRLLYNGSGQ (272 aa)) is the Peptidase S8 domain. Active-site charge relay system residues include Asp160 and His191. Asn252 carries an N-linked (GlcNAc...) asparagine glycan. Ser346 functions as the Charge relay system in the catalytic mechanism. Residues 380-392 (AISNPGSGTTNRL) are compositionally biased toward polar residues. The disordered stretch occupies residues 380–399 (AISNPGSGTTNRLLYNGSGQ). Asn395 is a glycosylation site (N-linked (GlcNAc...) asparagine).

It belongs to the peptidase S8 family.

It localises to the secreted. Functionally, secreted subtilisin-like serine protease with keratinolytic activity that contributes to pathogenicity. The polypeptide is Subtilisin-like protease 4 (SUB4) (Arthroderma gypseum (strain ATCC MYA-4604 / CBS 118893) (Microsporum gypseum)).